Consider the following 150-residue polypeptide: MKVSRHAKILEIINSKDIDTQEELAEELKKMGMNVTQATVSRDIKELKLIKVLGNTGKYKYATINHTESYMSDKLINIFAQTVINVENIDKLIIIKAISGSAPAAAEAIDTLGFDGVAGTIAGDNTIFVMARTNEKAQEITMKLKKIITA.

Belongs to the ArgR family.

The protein localises to the cytoplasm. It functions in the pathway amino-acid biosynthesis; L-arginine biosynthesis [regulation]. Regulates arginine biosynthesis genes. This chain is Arginine repressor, found in Clostridium botulinum (strain ATCC 19397 / Type A).